The sequence spans 951 residues: Thyroid hormone receptor-associated protein 3 (951 aa).

The span at 1–13 shows a compositional bias: low complexity; it reads MSKTNKSKSGSRS. The tract at residues 1-94 is disordered; it reads MSKTNKSKSG…YFRGRNRGFY (94 aa). An N-acetylserine modification is found at Ser-2. Positions 2–190 are required for mRNA splicing activation; sequence SKTNKSKSGS…KSSSKDSRPS (189 aa). A compositionally biased stretch (basic residues) spans 14–51; the sequence is SRSRSASRSRSRSFSKSRSRSRSVSRSRKRRLSSRSRS. Position 17 is a dimethylated arginine (Arg-17). Basic and acidic residues predominate over residues 58–75; sequence HNRERNHPRVYQNRDFRG. An Asymmetric dimethylarginine modification is found at Arg-66. Low complexity predominate over residues 82-94; it reads RPYYFRGRNRGFY. Residues Arg-101 and Arg-108 each carry the asymmetric dimethylarginine modification. Residues 117-558 are disordered; the sequence is AYSPRRGRSR…GDFSSGKSSF (442 aa). Residues 121-143 show a composition bias toward basic residues; it reads RRGRSRSRSPKRRSPSPRSRSHS. The span at 144–155 shows a compositional bias: basic and acidic residues; the sequence is RNSDKSSSDRSR. Residues 157–166 show a composition bias toward low complexity; sequence SSSSRSSSNH. Positions 167–188 are enriched in basic and acidic residues; the sequence is SRVESSKRKSTKEKKSSSKDSR. A Glycyl lysine isopeptide (Lys-Gly) (interchain with G-Cter in SUMO1); alternate cross-link involves residue Lys-202. Lys-202 participates in a covalent cross-link: Glycyl lysine isopeptide (Lys-Gly) (interchain with G-Cter in SUMO2); alternate. A compositionally biased stretch (polar residues) spans 204–220; it reads QTFSGGTSQDIKGSESS. A Glycyl lysine isopeptide (Lys-Gly) (interchain with G-Cter in SUMO2) cross-link involves residue Lys-215. Ser-220 carries the phosphoserine modification. Lys-221 participates in a covalent cross-link: Glycyl lysine isopeptide (Lys-Gly) (interchain with G-Cter in SUMO2); alternate. Position 221 is an N6-acetyllysine; alternate (Lys-221). Residues Ser-233, Ser-238, Ser-240, Ser-243, and Ser-248 each carry the phosphoserine modification. Lys-252 is covalently cross-linked (Glycyl lysine isopeptide (Lys-Gly) (interchain with G-Cter in SUMO2); alternate). Lys-252 carries the post-translational modification N6-methyllysine; alternate. Phosphoserine occurs at positions 253 and 257. Residues 266-276 show a composition bias toward pro residues; sequence RPSPVPKPSPP. The span at 305 to 322 shows a compositional bias: low complexity; it reads GSGSLSPSKKSPVGKSPP. 2 positions are modified to phosphoserine: Ser-315 and Ser-320. Thr-324 carries the post-translational modification Phosphothreonine. Ser-326 is subject to Phosphoserine. Tyr-328 is subject to Phosphotyrosine. Lys-333 participates in a covalent cross-link: Glycyl lysine isopeptide (Lys-Gly) (interchain with G-Cter in SUMO2). Residues 337–346 show a composition bias toward low complexity; the sequence is AASGGAAYSK. Position 339 is a phosphoserine (Ser-339). A Glycyl lysine isopeptide (Lys-Gly) (interchain with G-Cter in SUMO2); alternate cross-link involves residue Lys-346. Position 346 is an N6-acetyllysine; alternate (Lys-346). Over residues 347–387 the composition is skewed to basic and acidic residues; that stretch reads RYLEEQKTENGKDKEQKQTNADKEKLKEKGGFSDADVKMKS. Residues Lys-353 and Lys-375 each participate in a glycyl lysine isopeptide (Lys-Gly) (interchain with G-Cter in SUMO2) cross-link. Residues 359 to 951 are required for mRNA decay activity; the sequence is DKEQKQTNAD…EKDSLQPSAE (593 aa). Ser-379 is subject to Phosphoserine. Residue Lys-384 forms a Glycyl lysine isopeptide (Lys-Gly) (interchain with G-Cter in SUMO1); alternate linkage. Residue Lys-384 forms a Glycyl lysine isopeptide (Lys-Gly) (interchain with G-Cter in SUMO2); alternate linkage. Glycyl lysine isopeptide (Lys-Gly) (interchain with G-Cter in SUMO2) cross-links involve residues Lys-386 and Lys-393. A Phosphothreonine modification is found at Thr-394. Lys-398 is covalently cross-linked (Glycyl lysine isopeptide (Lys-Gly) (interchain with G-Cter in SUMO2)). A phosphoserine mark is found at Ser-403 and Ser-405. A compositionally biased stretch (basic and acidic residues) spans 411–449; sequence LRDDFEKKMADFHKEELDEHDKDKSKGRKEPEFDDEPKF. Glycyl lysine isopeptide (Lys-Gly) (interchain with G-Cter in SUMO2) cross-links involve residues Lys-418 and Lys-424. A Glycyl lysine isopeptide (Lys-Gly) (interchain with G-Cter in SUMO1); alternate cross-link involves residue Lys-448. Residues Lys-448 and Lys-452 each participate in a glycyl lysine isopeptide (Lys-Gly) (interchain with G-Cter in SUMO2); alternate cross-link. At Lys-452 the chain carries N6-acetyllysine; alternate. Residues Lys-459 and Lys-465 each participate in a glycyl lysine isopeptide (Lys-Gly) (interchain with G-Cter in SUMO2) cross-link. Basic and acidic residues-rich tracts occupy residues 460–483 and 490–518; these read NQEE…RKAE and FTER…EKNF. Ser-466 is modified (phosphoserine). Glycyl lysine isopeptide (Lys-Gly) (interchain with G-Cter in SUMO2); alternate cross-links involve residues Lys-468 and Lys-476. 2 positions are modified to N6-acetyllysine; alternate: Lys-468 and Lys-476. Lys-481 participates in a covalent cross-link: Glycyl lysine isopeptide (Lys-Gly) (interchain with G-Cter in SUMO2). N6-acetyllysine is present on Lys-516. Residue Lys-524 forms a Glycyl lysine isopeptide (Lys-Gly) (interchain with G-Cter in SUMO2); alternate linkage. Lys-524 carries the N6-acetyllysine; alternate modification. Phosphoserine is present on Ser-532. The segment covering 537–547 has biased composition (basic and acidic residues); the sequence is KTSESRDKLGS. A Glycyl lysine isopeptide (Lys-Gly) (interchain with G-Cter in SUMO2) cross-link involves residue Lys-548. Residues 548–558 are compositionally biased toward low complexity; that stretch reads KGDFSSGKSSF. 549-556 lines the ATP pocket; sequence GDFSSGKS. Lys-555 is covalently cross-linked (Glycyl lysine isopeptide (Lys-Gly) (interchain with G-Cter in SUMO2); alternate). Lys-555 bears the N6-acetyllysine; alternate mark. Ser-557, Ser-559, and Ser-572 each carry phosphoserine. Lys-599 is covalently cross-linked (Glycyl lysine isopeptide (Lys-Gly) (interchain with G-Cter in SUMO2)). Ser-616, Ser-619, Ser-669, Ser-679, and Ser-681 each carry phosphoserine. A compositionally biased stretch (basic and acidic residues) spans 660-677; that stretch reads EQEAAKNKKSPEIHRRID. The disordered stretch occupies residues 660–951; that stretch reads EQEAAKNKKS…EKDSLQPSAE (292 aa). Residues 688 to 758 are compositionally biased toward basic and acidic residues; the sequence is LTHEELKSPR…RSTEKTEKTH (71 aa). Residue Lys-694 forms a Glycyl lysine isopeptide (Lys-Gly) (interchain with G-Cter in SUMO2) linkage. The residue at position 695 (Ser-695) is a Phosphoserine. Residues Lys-702, Lys-706, Lys-708, Lys-753, and Lys-756 each participate in a glycyl lysine isopeptide (Lys-Gly) (interchain with G-Cter in SUMO2) cross-link. Positions 759–772 are enriched in basic residues; it reads KGSKKQKKHRRARD. A compositionally biased stretch (low complexity) spans 776-786; sequence SSSSSSQSSHS. Lys-808 is modified (N6-acetyllysine). The residue at position 841 (Arg-841) is an Asymmetric dimethylarginine. Residues 844–854 show a composition bias toward low complexity; sequence YSGNNNNNSNN. Ser-860 carries the phosphoserine modification. Thr-870 carries the post-translational modification Phosphothreonine. Residues Lys-872 and Lys-875 each participate in a glycyl lysine isopeptide (Lys-Gly) (interchain with G-Cter in SUMO2) cross-link. Basic and acidic residues predominate over residues 877-891; it reads YLHDDREGEGSDKWM. Phosphoserine occurs at positions 924 and 935. Residues 926–936 show a composition bias toward acidic residues; sequence EEGEIEDDESG.

The protein belongs to the BCLAF1/THRAP3 family. Associated with the large multiprotein complex TRAP (Mediator complex-like). Interacts with SFPQ; the interaction is dependent on SFPQ phosphorylation at 'Thr-687' and inhibits binding of SFPQ to an ESS1 exonic splicing silencer element-containing RNA. Interacts with NXF1. Component of the SNARP complex which consists at least of SNIP1, SNW1, THRAP3, BCLAF1 and PNN. Associated with spliced mRNP complexes. Interacts with HELZ2 and PPARG. Interacts with CLOCK and BMAL1. Component of a MACOM-like complex, named WTAP complex, composed of WTAP, ZC3H13, CBLL1, KIAA1429, RBM15, BCLAF1 and THRAP3.

It localises to the nucleus. The protein resides in the nucleoplasm. The protein localises to the nucleus speckle. Its function is as follows. Involved in pre-mRNA splicing. Remains associated with spliced mRNA after splicing which probably involves interactions with the exon junction complex (EJC). Can trigger mRNA decay which seems to be independent of nonsense-mediated decay involving premature stop codons (PTC) recognition. May be involved in nuclear mRNA decay. Involved in regulation of signal-induced alternative splicing. During splicing of PTPRC/CD45 is proposed to sequester phosphorylated SFPQ from PTPRC/CD45 pre-mRNA in resting T-cells. Involved in cyclin-D1/CCND1 mRNA stability probably by acting as component of the SNARP complex which associates with both the 3'end of the CCND1 gene and its mRNA. Involved in response to DNA damage. Is excluced from DNA damage sites in a manner that parallels transcription inhibition; the function may involve the SNARP complex. Initially thought to play a role in transcriptional coactivation through its association with the TRAP complex; however, it is not regarded as a stable Mediator complex subunit. Cooperatively with HELZ2, enhances the transcriptional activation mediated by PPARG, maybe through the stabilization of the PPARG binding to DNA in presence of ligand. May play a role in the terminal stage of adipocyte differentiation. Plays a role in the positive regulation of the circadian clock. Acts as a coactivator of the CLOCK-BMAL1 heterodimer and promotes its transcriptional activator activity and binding to circadian target genes. This Mus musculus (Mouse) protein is Thyroid hormone receptor-associated protein 3 (Thrap3).